A 207-amino-acid chain; its full sequence is Large ribosomal subunit protein uL3c (207 aa).

The segment at 129–148 (TRGPMTHGSKNHRAPGSIGM) is disordered.

Belongs to the universal ribosomal protein uL3 family. In terms of assembly, part of the 50S ribosomal subunit.

It is found in the plastid. It localises to the chloroplast. In terms of biological role, one of the primary rRNA binding proteins, it binds directly near the 3'-end of the 23S rRNA, where it nucleates assembly of the 50S subunit. This is Large ribosomal subunit protein uL3c (rpl3) from Phaeodactylum tricornutum (strain CCAP 1055/1).